A 253-amino-acid chain; its full sequence is Indole-3-glycerol phosphate synthase (253 aa).

Belongs to the TrpC family.

The catalysed reaction is 1-(2-carboxyphenylamino)-1-deoxy-D-ribulose 5-phosphate + H(+) = (1S,2R)-1-C-(indol-3-yl)glycerol 3-phosphate + CO2 + H2O. Its pathway is amino-acid biosynthesis; L-tryptophan biosynthesis; L-tryptophan from chorismate: step 4/5. The chain is Indole-3-glycerol phosphate synthase from Bacillus mycoides (strain KBAB4) (Bacillus weihenstephanensis).